The chain runs to 202 residues: Imidazoleglycerol-phosphate dehydratase (202 aa).

The protein belongs to the imidazoleglycerol-phosphate dehydratase family.

The protein resides in the cytoplasm. The enzyme catalyses D-erythro-1-(imidazol-4-yl)glycerol 3-phosphate = 3-(imidazol-4-yl)-2-oxopropyl phosphate + H2O. The protein operates within amino-acid biosynthesis; L-histidine biosynthesis; L-histidine from 5-phospho-alpha-D-ribose 1-diphosphate: step 6/9. In Acinetobacter baylyi (strain ATCC 33305 / BD413 / ADP1), this protein is Imidazoleglycerol-phosphate dehydratase.